We begin with the raw amino-acid sequence, 209 residues long: MGKFQVISHPLIQHKLSILRRTSTSTKDFRELVNEIAMLMGYEVLRDLPLEDVEIETPITKTVQKQIAGKKLAIVPILRAGVGMVDGLLSLVPAAKVGHIGMYRDEETLQPVEYLVKLPEDIDQRHIFVVDPMLATGGSAILAVDSLKKRGASNIKFVALVSAPEGVKALQDAHPDIDIYTAALDEKLNEKGYIVPGLGDAGDRLFGTK.

5-phospho-alpha-D-ribose 1-diphosphate-binding positions include R79, R104, and 131–139 (DPMLATGGS). Uracil is bound by residues I194 and 199–201 (GDA). A 5-phospho-alpha-D-ribose 1-diphosphate-binding site is contributed by D200.

This sequence belongs to the UPRTase family. Mg(2+) is required as a cofactor.

The enzyme catalyses UMP + diphosphate = 5-phospho-alpha-D-ribose 1-diphosphate + uracil. Its pathway is pyrimidine metabolism; UMP biosynthesis via salvage pathway; UMP from uracil: step 1/1. Allosterically activated by GTP. In terms of biological role, catalyzes the conversion of uracil and 5-phospho-alpha-D-ribose 1-diphosphate (PRPP) to UMP and diphosphate. This chain is Uracil phosphoribosyltransferase, found in Streptococcus suis (strain 05ZYH33).